The primary structure comprises 105 residues: Large ribosomal subunit protein eL36 (105 aa).

N6-acetyllysine is present on Lys62.

Belongs to the eukaryotic ribosomal protein eL36 family. As to quaternary structure, component of the large ribosomal subunit.

It is found in the cytoplasm. The protein localises to the cytosol. Component of the large ribosomal subunit. The ribosome is a large ribonucleoprotein complex responsible for the synthesis of proteins in the cell. The chain is Large ribosomal subunit protein eL36 (RPL36) from Bos taurus (Bovine).